The following is a 315-amino-acid chain: Ribosomal RNA small subunit methyltransferase H (315 aa).

Residues Gly-36–His-38, Asp-56, Phe-80, Asp-102, and Gln-109 contribute to the S-adenosyl-L-methionine site.

Belongs to the methyltransferase superfamily. RsmH family.

Its subcellular location is the cytoplasm. It carries out the reaction cytidine(1402) in 16S rRNA + S-adenosyl-L-methionine = N(4)-methylcytidine(1402) in 16S rRNA + S-adenosyl-L-homocysteine + H(+). Specifically methylates the N4 position of cytidine in position 1402 (C1402) of 16S rRNA. This chain is Ribosomal RNA small subunit methyltransferase H, found in Proteus mirabilis (strain HI4320).